The primary structure comprises 402 residues: S-adenosylmethionine synthase (402 aa).

An ATP-binding site is contributed by His-16. Mg(2+) is bound at residue Asp-18. Residue Glu-44 participates in K(+) binding. L-methionine-binding residues include Glu-57 and Gln-103. Residues Gln-103 to Thr-113 are flexible loop. ATP contacts are provided by residues Asp-178–Lys-180, Lys-249–Phe-250, Asp-258, Arg-264–Lys-265, Ala-281, and Lys-285. An L-methionine-binding site is contributed by Asp-258. Position 289 (Lys-289) interacts with L-methionine.

This sequence belongs to the AdoMet synthase family. As to quaternary structure, homotetramer; dimer of dimers. The cofactor is Mg(2+). It depends on K(+) as a cofactor.

It is found in the cytoplasm. The catalysed reaction is L-methionine + ATP + H2O = S-adenosyl-L-methionine + phosphate + diphosphate. Its pathway is amino-acid biosynthesis; S-adenosyl-L-methionine biosynthesis; S-adenosyl-L-methionine from L-methionine: step 1/1. In terms of biological role, catalyzes the formation of S-adenosylmethionine (AdoMet) from methionine and ATP. The overall synthetic reaction is composed of two sequential steps, AdoMet formation and the subsequent tripolyphosphate hydrolysis which occurs prior to release of AdoMet from the enzyme. The chain is S-adenosylmethionine synthase from Mycobacterium sp. (strain JLS).